The following is a 339-amino-acid chain: DNA-directed RNA polymerase subunit alpha (339 aa).

An alpha N-terminal domain (alpha-NTD) region spans residues 1–233 (MVREEITGST…DLFLPFIHTE (233 aa)). Residues 266–339 (GIPLNCIFID…IDLPKNKFSL (74 aa)) are alpha C-terminal domain (alpha-CTD).

It belongs to the RNA polymerase alpha chain family. In terms of assembly, in plastids the minimal PEP RNA polymerase catalytic core is composed of four subunits: alpha, beta, beta', and beta''. When a (nuclear-encoded) sigma factor is associated with the core the holoenzyme is formed, which can initiate transcription.

The protein localises to the plastid. It is found in the chloroplast. It carries out the reaction RNA(n) + a ribonucleoside 5'-triphosphate = RNA(n+1) + diphosphate. Its function is as follows. DNA-dependent RNA polymerase catalyzes the transcription of DNA into RNA using the four ribonucleoside triphosphates as substrates. This Sorghum bicolor (Sorghum) protein is DNA-directed RNA polymerase subunit alpha.